A 260-amino-acid polypeptide reads, in one-letter code: Ribosomal RNA small subunit methyltransferase G (260 aa).

Residues Gly111, Phe116, and Arg181 each contribute to the S-adenosyl-L-methionine site.

This sequence belongs to the methyltransferase superfamily. RNA methyltransferase RsmG family.

It localises to the cytoplasm. It catalyses the reaction guanosine(527) in 16S rRNA + S-adenosyl-L-methionine = N(7)-methylguanosine(527) in 16S rRNA + S-adenosyl-L-homocysteine. Specifically methylates the N7 position of guanine in position 527 of 16S rRNA. This is Ribosomal RNA small subunit methyltransferase G from Nitrobacter hamburgensis (strain DSM 10229 / NCIMB 13809 / X14).